The sequence spans 320 residues: Biotin synthase (320 aa).

Residues 43–270 enclose the Radical SAM core domain; that stretch reads GAVQKSQLLS…KSWVRLSAGR (228 aa). Residues C58, C62, and C65 each contribute to the [4Fe-4S] cluster site. C102, C133, C193, and R265 together coordinate [2Fe-2S] cluster.

The protein belongs to the radical SAM superfamily. Biotin synthase family. As to quaternary structure, homodimer. The cofactor is [4Fe-4S] cluster. It depends on [2Fe-2S] cluster as a cofactor.

It catalyses the reaction (4R,5S)-dethiobiotin + (sulfur carrier)-SH + 2 reduced [2Fe-2S]-[ferredoxin] + 2 S-adenosyl-L-methionine = (sulfur carrier)-H + biotin + 2 5'-deoxyadenosine + 2 L-methionine + 2 oxidized [2Fe-2S]-[ferredoxin]. Its pathway is cofactor biosynthesis; biotin biosynthesis; biotin from 7,8-diaminononanoate: step 2/2. In terms of biological role, catalyzes the conversion of dethiobiotin (DTB) to biotin by the insertion of a sulfur atom into dethiobiotin via a radical-based mechanism. The polypeptide is Biotin synthase (Hyphomonas neptunium (strain ATCC 15444)).